A 496-amino-acid polypeptide reads, in one-letter code: Zinc finger and SCAN domain-containing protein 5C (496 aa).

Residues 1–19 are compositionally biased toward polar residues; sequence MAANCTSSWSLGESCNSPG. Residues 1 to 38 are disordered; that stretch reads MAANCTSSWSLGESCNSPGSEPPQSMPSPATQLGNHDS. Residues 44–126 form the SCAN box domain; that stretch reads HVNFRMFSCP…DLLRNNRRPK (83 aa). Disordered regions lie at residues 149 to 188 and 203 to 347; these read EAPASVRDDPRHVSSQRTSSVNQMCPEEGQASQELQTLPR and PETT…HPSG. Residues 161–171 show a composition bias toward polar residues; the sequence is VSSQRTSSVNQ. The segment covering 210–223 has biased composition (basic and acidic residues); it reads GDPKALRPKPTLEK. Residues 234–247 show a composition bias toward polar residues; sequence GLTSPEPQLPNSPT. Basic and acidic residues predominate over residues 253 to 263; that stretch reads KEGKEPQKRAS. 5 C2H2-type zinc fingers span residues 356-378, 384-406, 412-434, 440-462, and 468-490; these read FACEVCGKRFKYRGKLAVHTRSH, FQCNLCGKRFMQRIGLQFHQRTH, YTCDICQKQFTQKSYLKCHKRSH, FECKDCKKVFTYKANLKEHQRIH, and HKCSKCPRAFGRPATLRRHQKTH.

The protein resides in the nucleus. Functionally, may be involved in transcriptional regulation. The chain is Zinc finger and SCAN domain-containing protein 5C from Homo sapiens (Human).